We begin with the raw amino-acid sequence, 442 residues long: ATP-dependent protease ATPase subunit HslU (442 aa).

ATP contacts are provided by residues Ile18, 60 to 65 (GVGKTE), Asp255, Glu320, and Arg392.

It belongs to the ClpX chaperone family. HslU subfamily. A double ring-shaped homohexamer of HslV is capped on each side by a ring-shaped HslU homohexamer. The assembly of the HslU/HslV complex is dependent on binding of ATP.

It localises to the cytoplasm. In terms of biological role, ATPase subunit of a proteasome-like degradation complex; this subunit has chaperone activity. The binding of ATP and its subsequent hydrolysis by HslU are essential for unfolding of protein substrates subsequently hydrolyzed by HslV. HslU recognizes the N-terminal part of its protein substrates and unfolds these before they are guided to HslV for hydrolysis. The sequence is that of ATP-dependent protease ATPase subunit HslU from Hahella chejuensis (strain KCTC 2396).